The primary structure comprises 303 residues: Peroxisomal trans-2-enoyl-CoA reductase (303 aa).

23–47 (VTGGATGIGKAIVKELLELGSNVVI) contacts NADP(+). The residue at position 32 (Lys-32) is an N6-succinyllysine. Ser-49 carries the post-translational modification Phosphoserine. Tyr-179 functions as the Proton acceptor in the catalytic mechanism. Residue Tyr-179 is modified to Phosphotyrosine. The short motif at 301 to 303 (AKL) is the Microbody targeting signal element.

Belongs to the short-chain dehydrogenases/reductases (SDR) family. Interacts with PEX5, probably required to target it into peroxisomes.

The protein resides in the peroxisome. The enzyme catalyses a (2E)-enoyl-CoA + NADPH + H(+) = a 2,3-saturated acyl-CoA + NADP(+). It catalyses the reaction (2E)-decenoyl-CoA + NADPH + H(+) = decanoyl-CoA + NADP(+). It carries out the reaction (2E)-hexenoyl-CoA + NADPH + H(+) = hexanoyl-CoA + NADP(+). The catalysed reaction is (2E)-octenoyl-CoA + NADPH + H(+) = octanoyl-CoA + NADP(+). The enzyme catalyses (2E)-dodecenoyl-CoA + NADPH + H(+) = dodecanoyl-CoA + NADP(+). It catalyses the reaction (2E)-tetradecenoyl-CoA + NADPH + H(+) = tetradecanoyl-CoA + NADP(+). The protein operates within lipid metabolism; fatty acid biosynthesis. Functionally, participates in chain elongation of fatty acids. Catalyzes the reduction of trans-2-enoyl-CoAs of varying chain lengths from 6:1 to 16:1, having maximum activity with 10:1 CoA. Has no 2,4-dienoyl-CoA reductase activity. In Homo sapiens (Human), this protein is Peroxisomal trans-2-enoyl-CoA reductase.